A 373-amino-acid polypeptide reads, in one-letter code: Leucine aminopeptidase 1 (373 aa).

The N-terminal stretch at 1–18 (MKFISVLALGATATSVLG) is a signal peptide. Positions 176 and 195 each coordinate Zn(2+). N196 is a glycosylation site (N-linked (GlcNAc...) asparagine). 2 residues coordinate Zn(2+): E234 and D261. N286 carries N-linked (GlcNAc...) asparagine glycosylation. An intrachain disulfide couples C310 to C314. H343 contacts Zn(2+).

Belongs to the peptidase M28 family. M28E subfamily. Monomer. Zn(2+) serves as cofactor.

It localises to the secreted. Extracellular aminopeptidase which contributes to pathogenicity. The protein is Leucine aminopeptidase 1 (LAP1) of Arthroderma otae (strain ATCC MYA-4605 / CBS 113480) (Microsporum canis).